A 186-amino-acid polypeptide reads, in one-letter code: Crossover junction endodeoxyribonuclease RuvC (186 aa).

Residues Asp-7, Glu-73, and Asp-145 contribute to the active site. The Mg(2+) site is built by Asp-7, Glu-73, and Asp-145.

It belongs to the RuvC family. Homodimer which binds Holliday junction (HJ) DNA. The HJ becomes 2-fold symmetrical on binding to RuvC with unstacked arms; it has a different conformation from HJ DNA in complex with RuvA. In the full resolvosome a probable DNA-RuvA(4)-RuvB(12)-RuvC(2) complex forms which resolves the HJ. Mg(2+) serves as cofactor.

It localises to the cytoplasm. The catalysed reaction is Endonucleolytic cleavage at a junction such as a reciprocal single-stranded crossover between two homologous DNA duplexes (Holliday junction).. In terms of biological role, the RuvA-RuvB-RuvC complex processes Holliday junction (HJ) DNA during genetic recombination and DNA repair. Endonuclease that resolves HJ intermediates. Cleaves cruciform DNA by making single-stranded nicks across the HJ at symmetrical positions within the homologous arms, yielding a 5'-phosphate and a 3'-hydroxyl group; requires a central core of homology in the junction. The consensus cleavage sequence is 5'-(A/T)TT(C/G)-3'. Cleavage occurs on the 3'-side of the TT dinucleotide at the point of strand exchange. HJ branch migration catalyzed by RuvA-RuvB allows RuvC to scan DNA until it finds its consensus sequence, where it cleaves and resolves the cruciform DNA. The protein is Crossover junction endodeoxyribonuclease RuvC of Acidovorax sp. (strain JS42).